The sequence spans 281 residues: ATP phosphoribosyltransferase (281 aa).

The protein belongs to the ATP phosphoribosyltransferase family. Long subfamily. The cofactor is Mg(2+).

It is found in the cytoplasm. The enzyme catalyses 1-(5-phospho-beta-D-ribosyl)-ATP + diphosphate = 5-phospho-alpha-D-ribose 1-diphosphate + ATP. It functions in the pathway amino-acid biosynthesis; L-histidine biosynthesis; L-histidine from 5-phospho-alpha-D-ribose 1-diphosphate: step 1/9. With respect to regulation, feedback inhibited by histidine. Catalyzes the condensation of ATP and 5-phosphoribose 1-diphosphate to form N'-(5'-phosphoribosyl)-ATP (PR-ATP). Has a crucial role in the pathway because the rate of histidine biosynthesis seems to be controlled primarily by regulation of HisG enzymatic activity. The sequence is that of ATP phosphoribosyltransferase from Kocuria rhizophila (strain ATCC 9341 / DSM 348 / NBRC 103217 / DC2201).